The chain runs to 180 residues: MTTIVSVRRNGHIVIGGDGQATLGNTIMKNNVKKVRTLYNDTVIAGFAGGTADAFTLFELFEKKLQIHQGRFVKSAVELAKDWRTDRMLRRLEALLAVADKNTSLIITGNADVIQPESDVIAIGSGGPYAQSAARALLENTDLCARDIVRKSLQISGDICLYSNHFFSFEELIHENKDII.

The active site involves Thr2. Residues Gly157, Cys160, and Ser163 each contribute to the Na(+) site.

Belongs to the peptidase T1B family. HslV subfamily. As to quaternary structure, a double ring-shaped homohexamer of HslV is capped on each side by a ring-shaped HslU homohexamer. The assembly of the HslU/HslV complex is dependent on binding of ATP.

The protein resides in the cytoplasm. The catalysed reaction is ATP-dependent cleavage of peptide bonds with broad specificity.. With respect to regulation, allosterically activated by HslU binding. Functionally, protease subunit of a proteasome-like degradation complex believed to be a general protein degrading machinery. The polypeptide is ATP-dependent protease subunit HslV (Wigglesworthia glossinidia brevipalpis).